Reading from the N-terminus, the 196-residue chain is ATP-dependent Clp protease proteolytic subunit (196 aa).

S101 serves as the catalytic Nucleophile. H126 is an active-site residue.

This sequence belongs to the peptidase S14 family. Component of the chloroplastic Clp protease core complex.

It localises to the plastid. It is found in the chloroplast stroma. The catalysed reaction is Hydrolysis of proteins to small peptides in the presence of ATP and magnesium. alpha-casein is the usual test substrate. In the absence of ATP, only oligopeptides shorter than five residues are hydrolyzed (such as succinyl-Leu-Tyr-|-NHMec, and Leu-Tyr-Leu-|-Tyr-Trp, in which cleavage of the -Tyr-|-Leu- and -Tyr-|-Trp bonds also occurs).. Functionally, cleaves peptides in various proteins in a process that requires ATP hydrolysis. Has a chymotrypsin-like activity. Plays a major role in the degradation of misfolded proteins. The sequence is that of ATP-dependent Clp protease proteolytic subunit from Nasturtium officinale (Watercress).